We begin with the raw amino-acid sequence, 229 residues long: Large ribosomal subunit protein uL1 (229 aa).

Belongs to the universal ribosomal protein uL1 family. As to quaternary structure, part of the 50S ribosomal subunit.

Its function is as follows. Binds directly to 23S rRNA. The L1 stalk is quite mobile in the ribosome, and is involved in E site tRNA release. In terms of biological role, protein L1 is also a translational repressor protein, it controls the translation of the L11 operon by binding to its mRNA. In Clostridium botulinum (strain Loch Maree / Type A3), this protein is Large ribosomal subunit protein uL1.